Reading from the N-terminus, the 147-residue chain is Hemoglobin subunit beta (147 aa).

In terms of domain architecture, Globin spans 2 to 147 (ELTEAQRGAI…VVSALGKQYH (146 aa)). 2 residues coordinate heme b: H63 and H92.

Belongs to the globin family. Heterotetramer of two alpha chains and two beta chains. Red blood cells.

Involved in oxygen transport from gills to the various peripheral tissues. This is Hemoglobin subunit beta (hbb) from Electrophorus electricus (Electric eel).